A 137-amino-acid chain; its full sequence is Large ribosomal subunit protein uL16 (137 aa).

Belongs to the universal ribosomal protein uL16 family. In terms of assembly, part of the 50S ribosomal subunit.

Binds 23S rRNA and is also seen to make contacts with the A and possibly P site tRNAs. The chain is Large ribosomal subunit protein uL16 from Mycoplasma capricolum subsp. capricolum (strain California kid / ATCC 27343 / NCTC 10154).